The chain runs to 822 residues: Nose resistant to fluoxetine protein 6 (822 aa).

A signal peptide spans methionine 1–serine 24. Asparagine 236 carries N-linked (GlcNAc...) asparagine glycosylation. 3 consecutive transmembrane segments (helical) span residues leucine 306 to leucine 326, proline 617 to tryptophan 637, and isoleucine 655 to phenylalanine 675.

It belongs to the acyltransferase 3 family. In terms of tissue distribution, in L1 larvae through to adult, hyp3 and hyp5, the most anterior cells in the hypodermis, and in intestine. Other hypodermal cells show weaker expression.

The protein localises to the membrane. Functionally, plays a role in the uptake of a range of molecules including lipids and xenobiotic compounds from the intestine to surrounding tissues. Mediates transport of lipids from intestine to the reproductive tract. Required for efficient yolk transport into oocytes. Vital for embryonic development. The chain is Nose resistant to fluoxetine protein 6 (nrf-6) from Caenorhabditis elegans.